Consider the following 784-residue polypeptide: MLHVLWTFWILVAMTDLSRKGCSAQASLSCDAAGVCDGRSRSFTSIPSGLTAAMKSLDLSNNKITSIGHGDLRGCVNLRALILQSSGINTIEEDAFSSLSKLEYLDLSDNHLSNLSSSWFRPLSSLKYLNLLGNPYRILGETPLFLNLTHLQTLRVGNVATFSGIRRTDFAGLTSLDELEIKALSLQNYEPGSLQSIQSIHHLTFHLSQSDFLLGVFEDTLSSVGYLELRDANLDSFYFSELSTDEMNSPMKKLAFQNADLTDESFNELLKLLRYTPELLEVEFDDCTLNGVGDFQPSESDVVRELGKVETLIIRRLHIPRFYSFYDLSTVYTLLEKVKRITVENSKVFLVPCLFSQHLKSLEFLDLSENLMVEEYLKNAACEGSWPSLQTLILRQNRLKSIERTGKILLTLKNLTALDISRNSFQSMPDSCQWPGKMRFLNLSSTGIQAVKMCIPQTLEVLDVSNNNLISFSLFLPLLRELYISRNKLHTLPDASLFPVLLVMKIRENAISTFSKDQLSSFPKLVSLEAGGNHFICSCELLSFTLEHPALVQVLAGWPDSYLCDSPSRLRGQRVQDARPSVLECHQTLLVSGVCCALVLLILLIGGLCHHFHGLWYLRMMWAWLQAKRKPKKAPCRDICYDAFVSYSEQDSYWVENLMVQQLENSEPPFKLCLHKRDFVPGKWIIDNIIDSIEKSHKTLFVLSENFVRSEWCKYELDFSHFRLFDENNDAGILVLLEPIEKKAIPQRFCKLRKIMNTKTYLEWPLDEGQQEVFWVNLRTAIKS.

A signal peptide spans 1–24 (MLHVLWTFWILVAMTDLSRKGCSA). The Extracellular segment spans residues 25–588 (QASLSCDAAG…RPSVLECHQT (564 aa)). C30 and C36 form a disulfide bridge. LRR repeat units lie at residues 54–77 (MKSL…GCVN), 78–101 (LRAL…SLSK), 102–125 (LEYL…PLSS), 126–150 (LKYL…NLTH), 151–175 (LQTL…GLTS), 176–199 (LDEL…SIQS), 200–223 (IHHL…TLSS), 224–250 (VGYL…MNSP), 251–278 (MKKL…YTPE), 279–308 (LLEV…ELGK), 309–337 (VETL…LLEK), 338–361 (VKRI…HLKS), 362–388 (LEFL…SWPS), 389–414 (LQTL…TLKN), 415–437 (LTAL…WPGK), 438–457 (MRFL…CIPQ), 458–478 (TLEV…FLPL), 479–500 (LREL…LFPV), and 501–524 (LLVM…SFPK). N114 and N147 each carry an N-linked (GlcNAc...) asparagine glycan. An intrachain disulfide couples C353 to C382. The N-linked (GlcNAc...) asparagine glycan is linked to N414. C432 and C454 are disulfide-bonded. N442 carries N-linked (GlcNAc...) asparagine glycosylation. Residues 525–579 (LVSLEAGGNHFICSCELLSFTLEHPALVQVLAGWPDSYLCDSPSRLRGQRVQDAR) enclose the LRRCT domain. Residues 589 to 609 (LLVSGVCCALVLLILLIGGLC) traverse the membrane as a helical segment. The Cytoplasmic portion of the chain corresponds to 610-784 (HHFHGLWYLR…WVNLRTAIKS (175 aa)). The TIR domain maps to 639–782 (ICYDAFVSYS…VFWVNLRTAI (144 aa)). A Glycyl lysine isopeptide (Lys-Gly) (interchain with G-Cter in ubiquitin) cross-link involves residue K754. The ATG16L1-binding motif motif lies at 761-778 (YLEWPLDEGQQEVFWVNL).

Belongs to the Toll-like receptor family. As to quaternary structure, interacts with LY96, TLR1 and TLR6 (via extracellular domain). TLR2 seems to exist in heterodimers with either TLR1 or TLR6 before stimulation by the ligand. The heterodimers form bigger oligomers in response to their corresponding ligands as well as further heterotypic associations with other receptors such as CD14 and/or CD36. Binds MYD88 (via TIR domain). Interacts with TICAM1. Interacts with CNPY3. Interacts with ATG16L1. Interacts with PPP1R11. Interacts with TICAM2. Interacts with TIRAP. Ubiquitinated at Lys-754 by PPP1R11, leading to its degradation. Deubiquitinated by USP2. Post-translationally, glycosylation of Asn-442 is critical for secretion of the N-terminal ectodomain of TLR2.

It localises to the membrane. Its subcellular location is the cytoplasmic vesicle. The protein localises to the phagosome membrane. The protein resides in the membrane raft. Its function is as follows. Cooperates with LY96 to mediate the innate immune response to bacterial lipoproteins and other microbial cell wall components. Cooperates with TLR1 or TLR6 to mediate the innate immune response to bacterial lipoproteins or lipopeptides. Acts via MYD88 and TRAF6, leading to NF-kappa-B activation, cytokine secretion and the inflammatory response. May also promote apoptosis in response to lipoproteins. Forms activation clusters composed of several receptors depending on the ligand, these clusters trigger signaling from the cell surface and subsequently are targeted to the Golgi in a lipid-raft dependent pathway. Forms the cluster TLR2:TLR6:CD14:CD36 in response to diacylated lipopeptides and TLR2:TLR1:CD14 in response to triacylated lipopeptides. In Cricetulus griseus (Chinese hamster), this protein is Toll-like receptor 2 (TLR2).